The following is a 474-amino-acid chain: Gamma-aminobutyric acid receptor subunit beta-1 (474 aa).

The signal sequence occupies residues 1 to 25 (MWTVQNRESLGLLSFPVMVAMVCCA). Residues 26 to 245 (HSSNEPSNMS…SFRLKRNIGY (220 aa)) lie on the Extracellular side of the membrane. N-linked (GlcNAc...) asparagine glycans are attached at residues N33 and N105. Y122 lines the histamine pocket. Residues C161 and C175 are joined by a disulfide bond. N-linked (GlcNAc...) asparagine glycosylation occurs at N174. Histamine is bound by residues 181–182 (SY) and T227. Residues Y182 and T227 each coordinate 4-aminobutanoate. A run of 3 helical transmembrane segments spans residues 246-267 (FILQ…SFWI), 271-293 (ASAA…STHL), and 305-327 (AIDI…YAFV). The Cytoplasmic portion of the chain corresponds to 328–451 (NYIFFGKGPQ…DLTDVNSIDK (124 aa)). A helical membrane pass occupies residues 452 to 473 (WSRMFFPITFSLFNVVYWLYYV).

Belongs to the ligand-gated ion channel (TC 1.A.9) family. Gamma-aminobutyric acid receptor (TC 1.A.9.5) subfamily. GABRB1 sub-subfamily. In terms of assembly, heteropentamer, formed by a combination of alpha (GABRA1-6), beta (GABRB1-3), gamma (GABRG1-3), delta (GABRD), epsilon (GABRE), rho (GABRR1-3), pi (GABRP) and theta (GABRQ) chains, each subunit exhibiting distinct physiological and pharmacological properties. Binds UBQLN1.

It is found in the postsynaptic cell membrane. Its subcellular location is the cell membrane. The enzyme catalyses chloride(in) = chloride(out). With respect to regulation, potentiated by histamine. Beta subunit of the heteropentameric ligand-gated chloride channel gated by gamma-aminobutyric acid (GABA), a major inhibitory neurotransmitter in the brain. GABA-gated chloride channels, also named GABA(A) receptors (GABAAR), consist of five subunits arranged around a central pore and contain GABA active binding site(s) located at the alpha and beta subunit interface(s). When activated by GABA, GABAARs selectively allow the flow of chloride anions across the cell membrane down their electrochemical gradient. Chloride influx into the postsynaptic neuron following GABAAR opening decreases the neuron ability to generate a new action potential, thereby reducing nerve transmission. Beta-containing GABAARs can simultaneously bind GABA and histamine where histamine binds at the interface of two neighboring beta subunits, which may be involved in the regulation of sleep and wakefulness. This chain is Gamma-aminobutyric acid receptor subunit beta-1, found in Mus musculus (Mouse).